Consider the following 132-residue polypeptide: Profilin (132 aa).

It belongs to the profilin family. Occurs in many kinds of cells as a complex with monomeric actin in a 1:1 ratio.

Its subcellular location is the cytoplasm. The protein resides in the cytoskeleton. Functionally, binds to actin and affects the structure of the cytoskeleton. At high concentrations, profilin prevents the polymerization of actin, whereas it enhances it at low concentrations. By binding to PIP2, it inhibits the formation of IP3 and DG. The protein is Profilin of Naegleria pringsheimi (Amoeba).